A 307-amino-acid chain; its full sequence is Dihydroorotate dehydrogenase B (NAD(+)), catalytic subunit (307 aa).

Residues S20 and 44-45 (KT) each bind FMN. Substrate-binding positions include K44 and 68–72 (NSIGL). The FMN site is built by N98 and N126. N126 contributes to the substrate binding site. Residue C129 is the Nucleophile of the active site. Positions 164 and 190 each coordinate FMN. 191 to 192 (NT) is a substrate binding site. Residues G216, 242–243 (GG), and 264–265 (GS) contribute to the FMN site.

It belongs to the dihydroorotate dehydrogenase family. Type 1 subfamily. As to quaternary structure, heterotetramer of 2 PyrK and 2 PyrD type B subunits. FMN serves as cofactor.

The protein localises to the cytoplasm. It carries out the reaction (S)-dihydroorotate + NAD(+) = orotate + NADH + H(+). The protein operates within pyrimidine metabolism; UMP biosynthesis via de novo pathway; orotate from (S)-dihydroorotate (NAD(+) route): step 1/1. Its function is as follows. Catalyzes the conversion of dihydroorotate to orotate with NAD(+) as electron acceptor. This Carboxydothermus hydrogenoformans (strain ATCC BAA-161 / DSM 6008 / Z-2901) protein is Dihydroorotate dehydrogenase B (NAD(+)), catalytic subunit (pyrD).